Here is a 276-residue protein sequence, read N- to C-terminus: Adenylate kinase (276 aa).

52–57 serves as a coordination point for ATP; sequence GAGKGT. An NMP region spans residues 72 to 101; that stretch reads ATGDMLRAQVAAKTPLGREAKKIMDAGGLV. AMP-binding positions include threonine 73, arginine 78, 99 to 101, 128 to 131, and glutamine 135; these read GLV and GFPR. Residues 169–206 are LID; it reads GRLVHPASGRSYHKIFNPPKAPMTDDVTGEPLIQRSDD. Residues arginine 170 and 179 to 180 each bind ATP; that span reads SY. Residues arginine 203 and arginine 214 each contribute to the AMP site. An ATP-binding site is contributed by glutamine 242.

It belongs to the adenylate kinase family. AK2 subfamily. As to quaternary structure, monomer.

The protein localises to the cytoplasm. The protein resides in the cytosol. It is found in the mitochondrion intermembrane space. It carries out the reaction AMP + ATP = 2 ADP. In terms of biological role, catalyzes the reversible transfer of the terminal phosphate group between ATP and AMP. Plays an important role in cellular energy homeostasis and in adenine nucleotide metabolism. Adenylate kinase activity is critical for regulation of the phosphate utilization and the AMP de novo biosynthesis pathways. This is Adenylate kinase (adk1) from Pyrenophora tritici-repentis (strain Pt-1C-BFP) (Wheat tan spot fungus).